The chain runs to 105 residues: PTS system lactose-specific EIIA component (105 aa).

The PTS EIIA type-3 domain maps to glutamate 4–arginine 102. Catalysis depends on histidine 78, which acts as the Tele-phosphohistidine intermediate. The residue at position 78 (histidine 78) is a Phosphohistidine; by HPr. Aspartate 81 is a binding site for Mg(2+).

As to quaternary structure, homotrimer. Requires Mg(2+) as cofactor.

The protein localises to the cytoplasm. Its function is as follows. The phosphoenolpyruvate-dependent sugar phosphotransferase system (sugar PTS), a major carbohydrate active transport system, catalyzes the phosphorylation of incoming sugar substrates concomitantly with their translocation across the cell membrane. The enzyme II LacEF PTS system is involved in lactose transport. This Lactococcus lactis subsp. lactis (Streptococcus lactis) protein is PTS system lactose-specific EIIA component.